Reading from the N-terminus, the 481-residue chain is Cobyric acid synthase (481 aa).

One can recognise a GATase cobBQ-type domain in the interval 248–435 (ALTVAWLAFS…LHGMFGSDRF (188 aa)). Cysteine 330 functions as the Nucleophile in the catalytic mechanism. The active site involves histidine 427.

Belongs to the CobB/CobQ family. CobQ subfamily.

It participates in cofactor biosynthesis; adenosylcobalamin biosynthesis. Its function is as follows. Catalyzes amidations at positions B, D, E, and G on adenosylcobyrinic A,C-diamide. NH(2) groups are provided by glutamine, and one molecule of ATP is hydrogenolyzed for each amidation. The chain is Cobyric acid synthase from Cereibacter sphaeroides (strain ATCC 17025 / ATH 2.4.3) (Rhodobacter sphaeroides).